A 3933-amino-acid polypeptide reads, in one-letter code: Protein DOP1 homolog PFC0245c (3933 aa).

4 consecutive transmembrane segments (helical) span residues 70–90, 98–118, 140–160, and 163–183; these read LNPL…SSIF, FINN…HCTI, IFAY…NNIL, and IYSI…WLLL. Disordered regions lie at residues 468–494, 543–600, and 614–656; these read RLNN…KYQG, ININ…NMLH, and KKIN…SSSS. Residues 470 to 486 are compositionally biased toward low complexity; sequence NNNNNNNNNNNNNNNNN. The segment covering 546 to 561 has biased composition (acidic residues); sequence NDDDNLNYDDNEDDEY. 2 stretches are compositionally biased toward low complexity: residues 563-576 and 585-597; these read NYHN…NYFN and ENNN…NNNN. A coiled-coil region spans residues 620–651; it reads GQTNNYDDDEEEEDEEEEDNNNNTSYNNNNNN. Residues 625–639 are compositionally biased toward acidic residues; it reads YDDDEEEEDEEEEDN. The segment covering 640-656 has biased composition (low complexity); it reads NNNTSYNNNNNNSSSSS. Transmembrane regions (helical) follow at residues 782–802, 842–862, and 1186–1206; these read MLNL…YTFY, YLYI…MNFL, and FYFW…KSLL. Residues 1216 to 1255 are compositionally biased toward acidic residues; it reads DDTDDDDDDDDDDDDEEEDDDDEDDDDEDDEEEDDEEDLG. Disordered regions lie at residues 1216-1284 and 1361-1405; these read DDTD…MNKK and TNNN…NNFN. A compositionally biased stretch (basic residues) spans 1263 to 1284; the sequence is SSKKGKKKKKKSVHKNKLMNKK. Positions 1349 to 1403 form a coiled coil; the sequence is ELNKMKYMNEDITNNNNNINNNSNNNNNNKNNINNNNNNNNNNNNNNNNLNNLNN. Low complexity predominate over residues 1362 to 1405; sequence NNNNNINNNSNNNNNNKNNINNNNNNNNNNNNNNNNLNNLNNFN. The next 2 membrane-spanning stretches (helical) occupy residues 1462-1482 and 1997-2017; these read FIKL…MFCL and KNIF…KLIY. The disordered stretch occupies residues 2691-2739; the sequence is HRRKMNRQNIRTDSSNNNNNNNINSNNNNNNNNNNNNNNNNNNNNNIYN. Low complexity predominate over residues 2704–2739; that stretch reads SSNNNNNNNINSNNNNNNNNNNNNNNNNNNNNNIYN. The next 5 helical transmembrane spans lie at 2860–2880, 2905–2925, 3017–3037, 3200–3220, and 3276–3296; these read INLN…CTLT, IMSS…HIYV, YSEI…YHTV, ILIL…YIII, and IIIN…SWIF. Positions 3620-3646 are disordered; it reads LKNEKSTRTYNSSLQEGSDYDEEEDEE. The span at 3637-3646 shows a compositional bias: acidic residues; it reads SDYDEEEDEE. The stretch at 3897-3925 forms a coiled coil; sequence KEETIILLKELNSVENDINDLFLEVDLNE.

It belongs to the DOP1 family.

The protein resides in the membrane. May be involved in protein traffic between late Golgi and early endosomes. The chain is Protein DOP1 homolog PFC0245c from Plasmodium falciparum (isolate 3D7).